The chain runs to 606 residues: Alpha-1,2-mannosyltransferase MNN23 (606 aa).

At 1–14 (MSINFLSIPRNRFK) the chain is on the cytoplasmic side. The helical transmembrane segment at 15–35 (AIGVLSVTCILIYVILHSSII) threads the bilayer. The Extracellular portion of the chain corresponds to 36-606 (TTDFDVSDYG…QVAWLSKSQN (571 aa)). Residues 59-86 (DNGENLKDPQPELDNDKGNGETDTTTSN) are disordered. Positions 62–78 (ENLKDPQPELDNDKGNG) are enriched in basic and acidic residues.

Belongs to the MNN1/MNT family.

It is found in the golgi apparatus membrane. It participates in protein modification; protein glycosylation. Functionally, alpha-1,2-mannosyltransferase required for cell wall integrity. Responsible for addition of the first alpha-1,2-linked mannose to form the branches on the mannan backbone of oligosaccharides. Addition of alpha-1,2-mannose is required for stabilization of the alpha-1,6-mannose backbone and hence regulates mannan fibril length; and is important for both immune recognition and virulence. This chain is Alpha-1,2-mannosyltransferase MNN23 (MNN23), found in Candida albicans (strain SC5314 / ATCC MYA-2876) (Yeast).